The chain runs to 353 residues: uncharacterized protein (353 aa).

Residues M1–G24 form the signal peptide.

This sequence belongs to the chlamydial CPn_1058/CT_355/TC_0634 family.

This is an uncharacterized protein from Chlamydia trachomatis serovar D (strain ATCC VR-885 / DSM 19411 / UW-3/Cx).